The chain runs to 202 residues: Protein-methionine-sulfoxide reductase heme-binding subunit MsrQ (202 aa).

Helical transmembrane passes span 8-28, 42-62, 75-95, 110-130, 147-167, and 169-189; these read LAVFLGALAMPAWWLYQAWIF, LGLGALVLLLLTLAMTPLQKL, LGLWCFTYALLHLSAYCVFIL, PYIIVGMLGFICLFLLAITSN, LVYLILGLGLLHMLWVVRADL, and EWTLYAVVGASLMLLRLPSIA.

This sequence belongs to the MsrQ family. As to quaternary structure, heterodimer of a catalytic subunit (MsrP) and a heme-binding subunit (MsrQ). FMN serves as cofactor. The cofactor is heme b.

The protein resides in the cell inner membrane. Functionally, part of the MsrPQ system that repairs oxidized periplasmic proteins containing methionine sulfoxide residues (Met-O), using respiratory chain electrons. Thus protects these proteins from oxidative-stress damage caused by reactive species of oxygen and chlorine generated by the host defense mechanisms. MsrPQ is essential for the maintenance of envelope integrity under bleach stress, rescuing a wide series of structurally unrelated periplasmic proteins from methionine oxidation. MsrQ provides electrons for reduction to the reductase catalytic subunit MsrP, using the quinone pool of the respiratory chain. The chain is Protein-methionine-sulfoxide reductase heme-binding subunit MsrQ from Pseudomonas paraeruginosa (strain DSM 24068 / PA7) (Pseudomonas aeruginosa (strain PA7)).